The following is a 289-amino-acid chain: MIRIAIPNKGRLYEPTISIFKDAGLPISGGAESRKLFAKTTDPDIHILFARAADIPEYVQDGAADVGITGMDLITERGANVEALLDLKFGRANLVLAVPEDSDFEKAQDLEGKKVATEFPEITRRYFEKLGVNVNVIKVSGACEMTPHVGIADAIVDISSSGTTLLINHLKAIDMAFSSTVYLIANKESLRTKEKILDIKTAFESVLNAKKKRYLMMNVPESSLKAVKEVLPGMSGPTVMKVESSKFSEESILAVHAVVDADLIFTIVNRLKKVGARDVLVVPIERIMP.

Belongs to the ATP phosphoribosyltransferase family. Long subfamily. The cofactor is Mg(2+).

It is found in the cytoplasm. The enzyme catalyses 1-(5-phospho-beta-D-ribosyl)-ATP + diphosphate = 5-phospho-alpha-D-ribose 1-diphosphate + ATP. The protein operates within amino-acid biosynthesis; L-histidine biosynthesis; L-histidine from 5-phospho-alpha-D-ribose 1-diphosphate: step 1/9. With respect to regulation, feedback inhibited by histidine. In terms of biological role, catalyzes the condensation of ATP and 5-phosphoribose 1-diphosphate to form N'-(5'-phosphoribosyl)-ATP (PR-ATP). Has a crucial role in the pathway because the rate of histidine biosynthesis seems to be controlled primarily by regulation of HisG enzymatic activity. The polypeptide is ATP phosphoribosyltransferase (Methanosarcina mazei (strain ATCC BAA-159 / DSM 3647 / Goe1 / Go1 / JCM 11833 / OCM 88) (Methanosarcina frisia)).